The following is a 210-amino-acid chain: Protein GrpE (210 aa).

The tract at residues 1 to 42 (MANEERTIPETNVASERPEDPVESQTRAEGGEQIQEAAPETA) is disordered.

It belongs to the GrpE family. Homodimer.

The protein resides in the cytoplasm. Functionally, participates actively in the response to hyperosmotic and heat shock by preventing the aggregation of stress-denatured proteins, in association with DnaK and GrpE. It is the nucleotide exchange factor for DnaK and may function as a thermosensor. Unfolded proteins bind initially to DnaJ; upon interaction with the DnaJ-bound protein, DnaK hydrolyzes its bound ATP, resulting in the formation of a stable complex. GrpE releases ADP from DnaK; ATP binding to DnaK triggers the release of the substrate protein, thus completing the reaction cycle. Several rounds of ATP-dependent interactions between DnaJ, DnaK and GrpE are required for fully efficient folding. This Nitrosococcus oceani (strain ATCC 19707 / BCRC 17464 / JCM 30415 / NCIMB 11848 / C-107) protein is Protein GrpE.